The chain runs to 287 residues: Lipoyl synthase (287 aa).

The [4Fe-4S] cluster site is built by Cys34, Cys39, Cys45, Cys60, Cys64, Cys67, and Ser273. The Radical SAM core domain maps to 46–262; the sequence is WNKRHATVMI…KYIAYSKGFL (217 aa).

Belongs to the radical SAM superfamily. Lipoyl synthase family. Requires [4Fe-4S] cluster as cofactor.

The protein localises to the cytoplasm. The catalysed reaction is [[Fe-S] cluster scaffold protein carrying a second [4Fe-4S](2+) cluster] + N(6)-octanoyl-L-lysyl-[protein] + 2 oxidized [2Fe-2S]-[ferredoxin] + 2 S-adenosyl-L-methionine + 4 H(+) = [[Fe-S] cluster scaffold protein] + N(6)-[(R)-dihydrolipoyl]-L-lysyl-[protein] + 4 Fe(3+) + 2 hydrogen sulfide + 2 5'-deoxyadenosine + 2 L-methionine + 2 reduced [2Fe-2S]-[ferredoxin]. It functions in the pathway protein modification; protein lipoylation via endogenous pathway; protein N(6)-(lipoyl)lysine from octanoyl-[acyl-carrier-protein]: step 2/2. In terms of biological role, catalyzes the radical-mediated insertion of two sulfur atoms into the C-6 and C-8 positions of the octanoyl moiety bound to the lipoyl domains of lipoate-dependent enzymes, thereby converting the octanoylated domains into lipoylated derivatives. This is Lipoyl synthase from Wolbachia pipientis wMel.